The chain runs to 821 residues: Calpain-3 (821 aa).

The interval 7 to 37 (ASVAPRTAAEPRSPGPVPHPAQSKATEAGGG) is disordered. The Calpain catalytic domain maps to 74–417 (LYVDPEFPPD…FTKLEICNLT (344 aa)). Active-site residues include Cys129, His334, and Asn358. The segment at 418 to 586 (ADALQSDKLQ…KRNLSEEVEN (169 aa)) is domain III. Positions 587–649 (TISVDRPVKK…QPGSSDQESE (63 aa)) are linker. The segment at 609–652 (ANSNKELGVDQESEEGKGKTSPDKQKQSPQPQPGSSDQESEEQQ) is disordered. Residues 622 to 634 (EEGKGKTSPDKQK) are compositionally biased toward basic and acidic residues. Over residues 635–645 (QSPQPQPGSSD) the composition is skewed to low complexity. 4 EF-hand domains span residues 649–683 (EEQQQFRNIFKQIAGDDMEICADELKKVLNTVVNK), 692–725 (FTLESCRSMIALMDTDGSGKLNLQEFHHLWNKIK), 722–757 (NKIKAWQKIFKHYDTDQSGTINSYEMRNAVNDAGFH), and 787–821 (VRLEGMFRAFHAFDKDGDGIIKLNVLEWLQLTMYA). Residues 650 to 821 (EQQQFRNIFK…LEWLQLTMYA (172 aa)) form a domain IV region. Ca(2+)-binding residues include Ala662, Asp665, Glu667, Glu672, Asp705, Asp707, Ser709, Lys711, Glu716, Asp735, Asp737, Ser739, Thr741, Glu746, Asp800, Asp802, Asp804, and Ile806.

It belongs to the peptidase C2 family. Homodimer; via EF-hand domain 4. Interacts with TTN/titin. Interacts with CMYA5; this interaction, which results in CMYA5 proteolysis, may protect CAPN3 from autolysis. Interacts with SIMC1. Interacts with UTP25; the interaction is required for CAPN3 translocation to the nucleolus. As to expression, isoform I is skeletal muscle specific.

It is found in the cytoplasm. The protein resides in the nucleus. Its subcellular location is the nucleolus. The enzyme catalyses Broad endopeptidase activity.. With respect to regulation, activated by micromolar concentrations of calcium and inhibited by calpastatin. In terms of biological role, calcium-regulated non-lysosomal thiol-protease. Proteolytically cleaves CTBP1 at 'His-409'. Mediates, with UTP25, the proteasome-independent degradation of p53/TP53. The chain is Calpain-3 from Homo sapiens (Human).